The following is a 190-amino-acid chain: Female-specific histamine-binding protein 2 (190 aa).

The N-terminal stretch at 1-19 is a signal peptide; sequence MKLLILSLALVLALSQVKG. Histamine is bound by residues S39, D43, Y55, D58, W61, E101, F117, Y119, F127, D139, E154, and W156. 2 disulfide bridges follow: C67/C188 and C138/C167.

This sequence belongs to the calycin superfamily. Histamine-binding salivary protein family. In terms of assembly, monomer. As to expression, expressed in salivary glands.

The protein resides in the secreted. Salivary tick protein that acts by scavenging histamine at the wound site, outcompeting histamine receptors for histamine, thereby overcoming host inflammatory responses. Binds histamine with a high-affinity (Kd=1.7 nM). Contains two binding histamine sites (H and L), that appear to bind histamine with differing affinities (high and low). This chain is Female-specific histamine-binding protein 2, found in Rhipicephalus appendiculatus (Brown ear tick).